Here is a 114-residue protein sequence, read N- to C-terminus: Large ribosomal subunit protein bL19 (114 aa).

Belongs to the bacterial ribosomal protein bL19 family.

This protein is located at the 30S-50S ribosomal subunit interface and may play a role in the structure and function of the aminoacyl-tRNA binding site. This is Large ribosomal subunit protein bL19 from Bacillus cereus (strain AH187).